Consider the following 461-residue polypeptide: Diaboline synthase (461 aa).

Residues His-185 and Asp-400 each act as proton acceptor in the active site.

Belongs to the plant acyltransferase family. As to quaternary structure, monomer.

The protein localises to the cytoplasm. It catalyses the reaction 17,18-epoxy-17-hydroxycur-19-ene + acetyl-CoA = diaboline + CoA. It functions in the pathway alkaloid biosynthesis. Functionally, acetyltransferase involved in the biosynthesis of curare monoterpene indole alkaloids (MIAs), natural products such as diaboline, a pharmacologically active compound used to regulate blood pressure. Curare alkaloids act as animal glycine receptor antagonists. Catalyzes the conversion of 17,18-epoxy-17-hydroxycur-19-ene (Wieland-Gumlich aldehyde) to diaboline. The chain is Diaboline synthase from Strychnos sp.